Here is a 240-residue protein sequence, read N- to C-terminus: Dihydromonapterin reductase (240 aa).

Residue Y152 is the Proton acceptor of the active site.

It belongs to the short-chain dehydrogenases/reductases (SDR) family. FolM subfamily.

It carries out the reaction (6S)-5,6,7,8-tetrahydrofolate + NADP(+) = 7,8-dihydrofolate + NADPH + H(+). It catalyses the reaction 7,8-dihydromonapterin + NADPH + H(+) = 5,6,7,8-tetrahydromonapterin + NADP(+). Its function is as follows. Catalyzes the reduction of dihydromonapterin to tetrahydromonapterin. Also has lower activity with dihydrofolate. This chain is Dihydromonapterin reductase (folM), found in Citrobacter koseri (strain ATCC BAA-895 / CDC 4225-83 / SGSC4696).